The chain runs to 1563 residues: Rab-3-interacting molecule unc-10 (1563 aa).

In terms of domain architecture, RabBD spans 7-133; the sequence is MPDLSHLSAE…AKTGKWFQPE (127 aa). Basic and acidic residues predominate over residues 25–35; sequence FKRQKDEEAKE. The segment at 25–50 is disordered; the sequence is FKRQKDEEAKETQISQKASEELSELD. Residues 66-121 form an FYVE-type zinc finger; that stretch reads TQDDAICQICQKTKFADGIGHKCFYCQLRSCARCGGRAQSKNKAIWACSLCQKRQQ. Residues cysteine 72, cysteine 75, cysteine 88, cysteine 91, cysteine 96, cysteine 99, cysteine 113, and cysteine 116 each contribute to the Zn(2+) site. Disordered regions lie at residues 128–466 and 582–605; these read KWFQ…DHLN and GGLD…RNDH. Positions 172-182 are enriched in polar residues; that stretch reads NTPNYQNNQQP. Composition is skewed to low complexity over residues 190-284 and 300-316; these read NHNQ…RNQT and QTPQ…VGAA. Residues 326–345 show a composition bias toward basic and acidic residues; that stretch reads QEQHHQQMNEQRTDNNRMRE. 2 stretches are compositionally biased toward polar residues: residues 356–367 and 379–389; these read RQPSLEQTTPMN and QRPTFYTGNSE. Low complexity predominate over residues 395 to 415; that stretch reads FDGQMQQGSQQNNQNQNQNNR. Residues 643-733 enclose the PDZ domain; the sequence is HMILHRTENS…DTSVELIVSR (91 aa). One can recognise a C2 1 domain in the interval 840–962; it reads IFGRIEVSFV…PLDGEHSLMC (123 aa). Disordered stretches follow at residues 1054-1163, 1177-1311, and 1346-1373; these read ENDI…YLGD, GQMT…GGSA, and VGIP…KEST. Residues 1086-1097 are compositionally biased toward polar residues; that stretch reads WTQNHQRQSGYT. A compositionally biased stretch (basic residues) spans 1112–1121; sequence YNRRQQRRPR. The span at 1129–1154 shows a compositional bias: basic and acidic residues; the sequence is MEREDMYDPTRKHRDDNEYSMRESVR. The segment covering 1181–1230 has biased composition (low complexity); it reads PKQHNQQHQPHPLSQAHQQQQTAGVQPQHHQGFQQQQHPQQPNQQMQQMQ. The segment covering 1242–1255 has biased composition (polar residues); that stretch reads GSETLSVHSTNSMP. The span at 1256 to 1277 shows a compositional bias: low complexity; sequence TTMTTVNRRNMNANNTSNDNTS. Residues 1278–1288 show a composition bias toward polar residues; it reads FAETPTANTNR. A compositionally biased stretch (low complexity) spans 1297–1311; the sequence is NSLASSSSVAGGGSA. In terms of domain architecture, C2 2 spans 1417-1536; sequence VLGEIQIALM…LGSQPLIGWY (120 aa).

As to expression, restricted to discrete puncta in synapse-rich regions of the nervous system including the nerve ring, the ventral nerve cord and the dorsal nerve cord. Localized expression was found in the head.

It is found in the synapse. Its function is as follows. Regulates the efficiency of a post-docking step of the release pathway. Acts after vesicle docking likely via regulating priming. May regulate the conformational changes in syntaxin. Binding of vesicles via rab-3[GTP] to Rim may signal the presence of a docked synaptic vesicle. Rim may then signal to unc-13 to change the conformation of syntaxin from the closed to the open state. Syntaxin could then engage synaptobrevin on the docked vesicle to form SNARE complexes and to prime the vesicle for release. Not required for the development or the structural organization of synapses. May play a role in regulating entry into the dauer state. This chain is Rab-3-interacting molecule unc-10, found in Caenorhabditis elegans.